Consider the following 435-residue polypeptide: Ribulose bisphosphate carboxylase/oxygenase activase 2, chloroplastic (435 aa).

A chloroplast-targeting transit peptide spans 1-56; it reads MAAAYSTVGAVNRAPLSLNGSGARASLVPSTAFFGSSLKKSAAKFPKASSGNFKIV. 165–172 contacts ATP; the sequence is GGKGQGKS.

It belongs to the RuBisCO activase family.

It localises to the plastid. The protein resides in the chloroplast stroma. Functionally, activation of RuBisCO (ribulose-1,5-bisphosphate carboxylase/oxygenase; EC 4.1.1.39) involves the ATP-dependent carboxylation of the epsilon-amino group of lysine leading to a carbamate structure. The polypeptide is Ribulose bisphosphate carboxylase/oxygenase activase 2, chloroplastic (RCA2) (Larrea tridentata (Creosote bush)).